The primary structure comprises 156 residues: Small ribosomal subunit protein uS7 (156 aa).

This sequence belongs to the universal ribosomal protein uS7 family. As to quaternary structure, part of the 30S ribosomal subunit. Contacts proteins S9 and S11.

Its function is as follows. One of the primary rRNA binding proteins, it binds directly to 16S rRNA where it nucleates assembly of the head domain of the 30S subunit. Is located at the subunit interface close to the decoding center, probably blocks exit of the E-site tRNA. In Saccharophagus degradans (strain 2-40 / ATCC 43961 / DSM 17024), this protein is Small ribosomal subunit protein uS7.